We begin with the raw amino-acid sequence, 301 residues long: Possible hemolysin C (301 aa).

CBS domains lie at 80 to 142 and 145 to 202; these read MVPR…NGRL and LIRK…IDDE.

The protein belongs to the UPF0053 family. Hemolysin C subfamily.

The protein is Possible hemolysin C (tlyC) of Rickettsia akari (strain Hartford).